Reading from the N-terminus, the 381-residue chain is uncharacterized protein (381 aa).

Helical transmembrane passes span 22–42 and 246–266; these read GVLL…YLTA and LIPE…LLVA.

It localises to the cell membrane. This is an uncharacterized protein from Mycobacterium tuberculosis (strain ATCC 25618 / H37Rv).